A 467-amino-acid chain; its full sequence is Syntaxin-5 (467 aa).

Disordered stretches follow at residues 1-53 (MQTR…QSLV) and 58-77 (GHEAAIHIGDNYQSGDSIST). The Cytoplasmic portion of the chain corresponds to 1–445 (MQTRRRLHQT…KYFQSVSKNR (445 aa)). The span at 10-22 (TDQQDYSSSSTYT) shows a compositional bias: low complexity. Gly residues predominate over residues 29-45 (GGAGAGSVGTGTAGGSV). Residues 68 to 77 (NYQSGDSIST) are compositionally biased toward polar residues. The stretch at 245–269 (IKGDLNALNQQIARLQDISKDQRRH) forms a coiled coil. The segment at 310–335 (QQKTRRDQFSQGPGPLAAHTVSPSTA) is disordered. Residues 375–437 (DNYVQQRAET…EAAHGEILKY (63 aa)) form the t-SNARE coiled-coil homology domain. Residues 446-466 (WLMIKIFGVLIFFFLFFVVFM) form a helical; Anchor for type IV membrane protein membrane-spanning segment. Position 467 (serine 467) is a topological domain, vesicular.

This sequence belongs to the syntaxin family. As to quaternary structure, homodimer.

The protein localises to the golgi apparatus. It localises to the cis-Golgi network membrane. Functionally, mediates endoplasmic reticulum to Golgi transport. The polypeptide is Syntaxin-5 (Drosophila melanogaster (Fruit fly)).